A 391-amino-acid chain; its full sequence is Putative gustatory receptor 98a (391 aa).

At 1 to 31 (MEQMSGELHAASLLYMRRLMKCLGMLPFGQN) the chain is on the cytoplasmic side. Residues 32–52 (LFSKGFCYVLLFVSLGFSSYW) form a helical membrane-spanning segment. Topologically, residues 53 to 74 (RFSFDYEFDYDFLNDRFSSTID) are extracellular. Residues 75–95 (LSNFVALVLGHAIIVLELLWG) traverse the membrane as a helical segment. Topologically, residues 96-128 (NCSKDVDRQLQAIHSQIKLQLGTSNSTDRVRRY) are cytoplasmic. Residues 129 to 149 (CNWIYGSLIIRWLIFIVVTIY) form a helical membrane-spanning segment. Residues 150–173 (SNRALTINATYSELVFLARFSEFT) lie on the Extracellular side of the membrane. Residue Asn157 is glycosylated (N-linked (GlcNAc...) asparagine). The chain crosses the membrane as a helical span at residues 174–194 (LYCAVILFIYQELIVGGSNVL). The Cytoplasmic portion of the chain corresponds to 195–239 (DELYRTRYEMWSIRRLSLQKLAKLQAIHNSLWQAIRCLECYFQLS). A helical transmembrane segment spans residues 240-260 (LITLLMKFFIDTSALPYWLYL). Over 261 to 272 (SRVEHTRVAVQH) the chain is Extracellular. The helical transmembrane segment at 273-293 (YVATVECIKLLEIVVPCYLCT) threads the bilayer. Residues 294–347 (RCDAMQRKFLSMFYTVTTDRRSSQLNAALRSLNLQLSQEKYKFSAGGMVDINTE) are Cytoplasmic-facing. The helical transmembrane segment at 348 to 368 (MLGKFFFGMISYIVICIQFSI) threads the bilayer. Residues 369 to 391 (NFRAKKMSNEQMSQNITSTSAPI) are Extracellular-facing. N-linked (GlcNAc...) asparagine glycosylation occurs at Asn383.

The protein belongs to the insect chemoreceptor superfamily. Gustatory receptor (GR) family. Gr2a subfamily.

Its subcellular location is the cell membrane. Probable gustatory receptor which mediates acceptance or avoidance behavior, depending on its substrates. In Drosophila melanogaster (Fruit fly), this protein is Putative gustatory receptor 98a (Gr98a).